The chain runs to 317 residues: Protoheme IX farnesyltransferase (317 aa).

A run of 9 helical transmembrane segments spans residues 36 to 56, 57 to 77, 108 to 128, 129 to 149, 157 to 177, 184 to 204, 230 to 247, 251 to 273, and 284 to 304; these read VMVLVIFTALVGMVVSDATVN, PVIAAISLLMIAVGAGASGCL, LAFGIVLSVGSVLILGLASNW, LAAGLLAFTIVFYAVIYSMWL, IVIGGAAGALPPVVGQAAVTG, LVLFAIIFIWTPPHFWALALV, IIWYSLVLAPLALLPVWL, GWLYAVVGVLGGLGMLAGAVQVY, and AAMGLFAFSILYLFLLFSALL.

It belongs to the UbiA prenyltransferase family. Protoheme IX farnesyltransferase subfamily.

Its subcellular location is the cell inner membrane. The enzyme catalyses heme b + (2E,6E)-farnesyl diphosphate + H2O = Fe(II)-heme o + diphosphate. It functions in the pathway porphyrin-containing compound metabolism; heme O biosynthesis; heme O from protoheme: step 1/1. In terms of biological role, converts heme B (protoheme IX) to heme O by substitution of the vinyl group on carbon 2 of heme B porphyrin ring with a hydroxyethyl farnesyl side group. The polypeptide is Protoheme IX farnesyltransferase (Methylorubrum extorquens (strain CM4 / NCIMB 13688) (Methylobacterium extorquens)).